Consider the following 263-residue polypeptide: Cobalt-precorrin-6A reductase (263 aa).

Belongs to the precorrin-6x reductase family.

The catalysed reaction is Co-precorrin-6B + NAD(+) = Co-precorrin-6A + NADH + H(+). It participates in cofactor biosynthesis; adenosylcobalamin biosynthesis; cob(II)yrinate a,c-diamide from sirohydrochlorin (anaerobic route): step 7/10. Functionally, catalyzes the reduction of the macrocycle of cobalt-precorrin-6A to cobalt-precorrin-6B. This is Cobalt-precorrin-6A reductase (cbiJ) from Salmonella typhimurium (strain LT2 / SGSC1412 / ATCC 700720).